An 89-amino-acid chain; its full sequence is Small ribosomal subunit protein uS17 (89 aa).

The protein belongs to the universal ribosomal protein uS17 family. In terms of assembly, part of the 30S ribosomal subunit.

In terms of biological role, one of the primary rRNA binding proteins, it binds specifically to the 5'-end of 16S ribosomal RNA. In Xylella fastidiosa (strain M12), this protein is Small ribosomal subunit protein uS17.